A 492-amino-acid polypeptide reads, in one-letter code: GlcNAc-binding protein A (492 aa).

Positions 1–23 are cleaved as a signal peptide; it reads MNKSSTKTLIALSMMAVSSGVSA. The region spanning 24–204 is the Chitin-binding type-4 domain; that stretch reads HGYVSETNDG…AFYNVIDVKF (181 aa). In terms of domain architecture, Chitin-binding type-3 spans 443–484; sequence AGTKVLAEDSNVYQCKEFPYSGYCVQWTETATNFAPGVGSDW.

This sequence belongs to the GbpA family.

The protein localises to the secreted. Functionally, probably interacts with GlcNAc residues. May promote attachment to both epithelial cell surfaces and chitin. The polypeptide is GlcNAc-binding protein A (Aliivibrio fischeri (strain MJ11) (Vibrio fischeri)).